Here is a 165-residue protein sequence, read N- to C-terminus: Protein SprT (165 aa).

The SprT-like domain occupies 10 to 158 (EACYRQAEHF…CRRCKATLVF (149 aa)). Residue histidine 69 participates in Zn(2+) binding. The active site involves glutamate 70. Histidine 73 serves as a coordination point for Zn(2+).

The protein belongs to the SprT family. The cofactor is Zn(2+).

It localises to the cytoplasm. The protein is Protein SprT of Pseudomonas aeruginosa (strain LESB58).